A 79-amino-acid polypeptide reads, in one-letter code: Antimicrobial peptide ToAP2 (79 aa).

A signal peptide spans 1-23; the sequence is MQFKKQLLVIFFAYFLVVNESEA. A propeptide spanning residues 50 to 79 is cleaved from the precursor; the sequence is SLMKRELKNLYDPYQRSVEMERLLKELPLY.

The protein belongs to the non-disulfide-bridged peptide (NDBP) superfamily. Medium-length antimicrobial peptide (group 3) family. In terms of tissue distribution, expressed by the venom gland.

The protein localises to the secreted. It is found in the target cell membrane. Its function is as follows. Antimicrobial peptide. Shows antibacterial activity against all M.massiliense bacterial strains tested. Has antifungal activity against Candida spp. and two Cryptococcus neoformans strains with MICs values ranging from 6.25 to 200 uM. Also shows an inhibitory activity on C.albicans biofilms at high concentrations. Exhibits chemotactic activity for monocytes, neutrophils, and eosinophils. Shows low cytotoxic activity and has weak hemolytic activity on human erythrocytes. In vivo, treatment of infected mice with M.massiliense reduces the bacterial load in the liver, lung, and spleen. May act by disrupting the integrity of the bacterial cell membrane. The sequence is that of Antimicrobial peptide ToAP2 from Tityus obscurus (Amazonian scorpion).